The chain runs to 302 residues: Pantothenate synthetase 4 (302 aa).

51 to 58 contributes to the ATP binding site; sequence MGALHEGH. Catalysis depends on His58, which acts as the Proton donor. Gln82 contributes to the (R)-pantoate binding site. Gln82 provides a ligand contact to beta-alanine. Residue 166-169 coordinates ATP; it reads GRKD. Gln172 lines the (R)-pantoate pocket. ATP contacts are provided by residues Ala195 and 203–206; that span reads RSSR.

This sequence belongs to the pantothenate synthetase family. In terms of assembly, homodimer.

It is found in the cytoplasm. It catalyses the reaction (R)-pantoate + beta-alanine + ATP = (R)-pantothenate + AMP + diphosphate + H(+). It functions in the pathway cofactor biosynthesis; (R)-pantothenate biosynthesis; (R)-pantothenate from (R)-pantoate and beta-alanine: step 1/1. Its function is as follows. Catalyzes the condensation of pantoate with beta-alanine in an ATP-dependent reaction via a pantoyl-adenylate intermediate. This is Pantothenate synthetase 4 from Frankia alni (strain DSM 45986 / CECT 9034 / ACN14a).